Consider the following 1523-residue polypeptide: Slit homolog 3 protein (1523 aa).

The N-terminal stretch at 1-33 (MALGRTGAGAAVRARLALGLALASILSGPPAAA) is a signal peptide. An LRRNT domain is found at 34–61 (CPTKCTCSAASVDCHGLGLRAVPRGIPR). 6 LRR repeats span residues 62 to 83 (NAER…DFAG), 86 to 107 (NLRV…AFQD), 110 to 131 (QLER…LFQS), 134 to 155 (KLTR…AFRG), 158 to 179 (GVKN…AFRA), and 182 to 203 (DLEI…SFNH). A glycan (N-linked (GlcNAc...) asparagine) is linked at asparagine 72. N-linked (GlcNAc...) asparagine glycosylation is present at asparagine 192. In terms of domain architecture, LRRCT 1 spans 215-265 (NHLYCDCHLAWLSDWLRQRRTIGQFTLCMAPVHLRGFSVADVQKKEYVCPG). Residues 271-307 (PACNANSLSCPSACSCSNNIVDCRGKGLTEIPANLPE) enclose the LRRNT 2 domain. Cysteine 284 and cysteine 293 are oxidised to a cystine. 5 LRR repeats span residues 308-329 (GIVE…AFTQ), 332-353 (KLKR…AFQG), 356-377 (SLTS…LFDG), 380-401 (SLQL…TFQD), and 404-425 (NLNL…LFVP). Positions 437 to 487 (NPFVCDCHLKWLADYLQDNPIETSGARCSSPRRLANKRISQIKSKKFRCSG) constitute an LRRCT 2 domain. Intrachain disulfides connect cysteine 441–cysteine 464, cysteine 443–cysteine 485, cysteine 505–cysteine 511, and cysteine 509–cysteine 518. Positions 496-532 (SSECFMDLVCPEKCRCEGTIVDCSNQKLARIPSHLPE) constitute an LRRNT 3 domain. LRR repeat units follow at residues 533–554 (YTTD…GIFK), 558–579 (NLRK…AFDG), 582–603 (GVQE…MFRG), 606–627 (SLKT…TFAG), and 630–651 (SVRL…AFTT). The N-linked (GlcNAc...) asparagine glycan is linked to asparagine 563. N-linked (GlcNAc...) asparagine glycosylation occurs at asparagine 622. The LRRCT 3 domain occupies 663-713 (NPFNCNCHMAWLGRWLRKRRIVSGNPRCQKPFFLKEIPIQDVAIQDFTCDG). 2 disulfide bridges follow: cysteine 667/cysteine 690 and cysteine 669/cysteine 711. The LRRNT 4 domain occupies 716-752 (ESSCQLSPRCPEQCTCVETVVRCSNRGLHALPKGMPK). LRR repeat units follow at residues 753-774 (DVTE…LSAF), 776-797 (QLTL…TFSN), 800-821 (HLST…AFNG), and 824-845 (SLRV…SFND). Asparagine 784, asparagine 792, and asparagine 797 each carry an N-linked (GlcNAc...) asparagine glycan. In terms of domain architecture, LRRCT 4 spans 857-907 (NPLHCDCSLRWLSEWVKAGYKEPGIARCSSPESMADRLLLTTPTHRFQCKG). 6 consecutive EGF-like domains span residues 918 to 953 (NACL…KDCT), 955 to 994 (PINT…QRCE), 996 to 1032 (NPDD…ELCD), 1034 to 1072 (VIDY…KLCE), 1074 to 1110 (NNDD…LFCE), and 1119 to 1155 (QTSP…PRCE). Intrachain disulfides connect cysteine 920–cysteine 931, cysteine 925–cysteine 941, cysteine 943–cysteine 952, cysteine 959–cysteine 970, cysteine 964–cysteine 982, cysteine 984–cysteine 993, cysteine 1000–cysteine 1011, cysteine 1005–cysteine 1020, cysteine 1022–cysteine 1031, cysteine 1038–cysteine 1051, cysteine 1045–cysteine 1060, cysteine 1062–cysteine 1071, cysteine 1078–cysteine 1089, cysteine 1083–cysteine 1098, cysteine 1100–cysteine 1109, cysteine 1123–cysteine 1134, cysteine 1128–cysteine 1143, and cysteine 1145–cysteine 1154. An N-linked (GlcNAc...) asparagine glycan is attached at asparagine 928. Residue asparagine 1025 is glycosylated (N-linked (GlcNAc...) asparagine). Residues 1158–1332 (ITVNFVGKDS…PQSLGVSPGC (175 aa)) form the Laminin G-like domain. Residues asparagine 1181 and asparagine 1247 are each glycosylated (N-linked (GlcNAc...) asparagine). 5 disulfides stabilise this stretch: cysteine 1305-cysteine 1332, cysteine 1355-cysteine 1364, cysteine 1372-cysteine 1382, cysteine 1377-cysteine 1391, and cysteine 1393-cysteine 1402. 2 EGF-like domains span residues 1340–1365 (HGLC…PLCD) and 1368–1403 (ARDP…ALCD). Asparagine 1406 carries an N-linked (GlcNAc...) asparagine glycan. The 37-residue stretch at 1408–1444 (SASACSAFKCHHGQCHISDRGEPYCLCQPGFSGHHCE) folds into the EGF-like 9 domain. Intrachain disulfides connect cysteine 1412–cysteine 1422, cysteine 1417–cysteine 1432, cysteine 1434–cysteine 1443, cysteine 1449–cysteine 1487, cysteine 1467–cysteine 1501, cysteine 1478–cysteine 1517, and cysteine 1482–cysteine 1519. The region spanning 1449 to 1523 (CMGEIVREAI…HLECGCRACS (75 aa)) is the CTCK domain.

The protein localises to the secreted. Its function is as follows. May act as molecular guidance cue in cellular migration, and function may be mediated by interaction with roundabout homolog receptors. This is Slit homolog 3 protein (Slit3) from Mus musculus (Mouse).